Consider the following 356-residue polypeptide: MKIADIQVRTEHFPLTRPYRIAFRSIEEIDNLIVEIRTADGLLGLGAASPERHVTGETLEACHAALDHDRLGWLMGRDIRTLPRLCRELAERLPAAPAARAALDMALHDLVAQCLGLPLVEILGRAHDSLPTSVTIGIKPVEETLAEAREHLALGFRVLKVKLCGDEEQDFERLRRLHETLAGRAVVRVDPNQSYDRDGLLRLDRLVQELGIEFIEQPFPAGRTDWLRALPKAIRRRIAADESLLGPADAFALAAPPAACGIFNIKLMKCGGLAPARRIATIAETAGIDLMWGCMDESRISIAAALHAALACPATRYLDLDGSFDLARDVAEGGFILEDGRLRVTERPGLGLVYPD.

Residues Thr-135 and Lys-160–Lys-162 each bind substrate. Residues Asp-190, Glu-216, and Asp-241 each contribute to the Mg(2+) site. Substrate is bound by residues Lys-266, Asp-296, and Asp-319–Asp-321.

This sequence belongs to the mandelate racemase/muconate lactonizing enzyme family. Requires Mg(2+) as cofactor.

Catalyzes the epimerization of L-Lys-L-Arg to L-Lys-D-Arg. Can also catalyze the epimerization of other cationic dipeptides, such as L-Arg-L-Arg, L-Lys-L-Lys and L-Lys-L-His, but with lower efficiency (in vitro). This chain is L-Lys-D/L-Arg epimerase, found in Methylococcus capsulatus (strain ATCC 33009 / NCIMB 11132 / Bath).